Reading from the N-terminus, the 291-residue chain is U7 snRNA-associated Sm-like protein LSm11 (291 aa).

The disordered stretch occupies residues 55-84; that stretch reads ARGRARGAQRGQSRGPGGKRKGRKPEPDPE. In terms of domain architecture, Sm spans 124-199; that stretch reads SPLGELNRCV…LTLTRLFDRL (76 aa). Residues 155-289 are SM; sequence GFIVAFDKFW…RGENVLLVHI (135 aa). The interval 203 to 266 is disordered; sequence EPGSHDPAKG…RRNRKEKVDY (64 aa). Residues 251–261 are compositionally biased toward basic residues; sequence NRPKQRRRNRK.

Belongs to the snRNP Sm proteins family. Component of the heptameric ring U7 snRNP complex.

The protein resides in the nucleus. In terms of biological role, component of the U7 snRNP complex that is involved in the histone 3'-end pre-mRNA processing. Increases U7 snRNA levels but not histone 3'-end pre-mRNA processing activity, when overexpressed. Binds specifically to the Sm-binding site of U7 snRNA. The sequence is that of U7 snRNA-associated Sm-like protein LSm11 from Xenopus laevis (African clawed frog).